Here is a 347-residue protein sequence, read N- to C-terminus: Holliday junction branch migration complex subunit RuvB (347 aa).

A large ATPase domain (RuvB-L) region spans residues 1–186; the sequence is MKDENSINFL…FGITARFELY (186 aa). ATP is bound by residues Leu-25, Arg-26, Gly-67, Lys-70, Thr-71, Thr-72, 133-135, Arg-176, Tyr-186, and Arg-223; that span reads EDY. Position 71 (Thr-71) interacts with Mg(2+). A small ATPAse domain (RuvB-S) region spans residues 187–257; that stretch reads SEIELVEIIK…IVSIGLEMLR (71 aa). Residues 260–347 form a head domain (RuvB-H) region; sequence GEGLDEQDRN…DISENQRVSF (88 aa). Residues Arg-315 and Arg-320 each contribute to the DNA site.

This sequence belongs to the RuvB family. As to quaternary structure, homohexamer. Forms an RuvA(8)-RuvB(12)-Holliday junction (HJ) complex. HJ DNA is sandwiched between 2 RuvA tetramers; dsDNA enters through RuvA and exits via RuvB. An RuvB hexamer assembles on each DNA strand where it exits the tetramer. Each RuvB hexamer is contacted by two RuvA subunits (via domain III) on 2 adjacent RuvB subunits; this complex drives branch migration. In the full resolvosome a probable DNA-RuvA(4)-RuvB(12)-RuvC(2) complex forms which resolves the HJ.

It localises to the cytoplasm. The catalysed reaction is ATP + H2O = ADP + phosphate + H(+). Functionally, the RuvA-RuvB-RuvC complex processes Holliday junction (HJ) DNA during genetic recombination and DNA repair, while the RuvA-RuvB complex plays an important role in the rescue of blocked DNA replication forks via replication fork reversal (RFR). RuvA specifically binds to HJ cruciform DNA, conferring on it an open structure. The RuvB hexamer acts as an ATP-dependent pump, pulling dsDNA into and through the RuvAB complex. RuvB forms 2 homohexamers on either side of HJ DNA bound by 1 or 2 RuvA tetramers; 4 subunits per hexamer contact DNA at a time. Coordinated motions by a converter formed by DNA-disengaged RuvB subunits stimulates ATP hydrolysis and nucleotide exchange. Immobilization of the converter enables RuvB to convert the ATP-contained energy into a lever motion, pulling 2 nucleotides of DNA out of the RuvA tetramer per ATP hydrolyzed, thus driving DNA branch migration. The RuvB motors rotate together with the DNA substrate, which together with the progressing nucleotide cycle form the mechanistic basis for DNA recombination by continuous HJ branch migration. Branch migration allows RuvC to scan DNA until it finds its consensus sequence, where it cleaves and resolves cruciform DNA. This is Holliday junction branch migration complex subunit RuvB from Borrelia garinii subsp. bavariensis (strain ATCC BAA-2496 / DSM 23469 / PBi) (Borreliella bavariensis).